Consider the following 470-residue polypeptide: Asparagine--tRNA ligase (470 aa).

Belongs to the class-II aminoacyl-tRNA synthetase family. As to quaternary structure, homodimer.

It is found in the cytoplasm. The catalysed reaction is tRNA(Asn) + L-asparagine + ATP = L-asparaginyl-tRNA(Asn) + AMP + diphosphate + H(+). The chain is Asparagine--tRNA ligase from Blochmanniella pennsylvanica (strain BPEN).